The sequence spans 129 residues: Lysozyme C (129 aa).

The C-type lysozyme domain occupies 1–129; it reads KVYGRCELAA…VHAWIRGCRL (129 aa). Intrachain disulfides connect Cys6–Cys127, Cys30–Cys115, Cys64–Cys80, and Cys76–Cys94. Active-site residues include Glu35 and Asp52.

It belongs to the glycosyl hydrolase 22 family. In terms of assembly, monomer.

It localises to the secreted. It carries out the reaction Hydrolysis of (1-&gt;4)-beta-linkages between N-acetylmuramic acid and N-acetyl-D-glucosamine residues in a peptidoglycan and between N-acetyl-D-glucosamine residues in chitodextrins.. In terms of biological role, lysozymes have primarily a bacteriolytic function; those in tissues and body fluids are associated with the monocyte-macrophage system and enhance the activity of immunoagents. This is Lysozyme C (LYZ) from Lophophorus impejanus (Himalayan monal pheasant).